The chain runs to 192 residues: UPF0301 protein BTH_I1462 (192 aa).

The protein belongs to the UPF0301 (AlgH) family.

In Burkholderia thailandensis (strain ATCC 700388 / DSM 13276 / CCUG 48851 / CIP 106301 / E264), this protein is UPF0301 protein BTH_I1462.